Here is a 398-residue protein sequence, read N- to C-terminus: MMSMLGGLQRYFRVILLLLLALTLLLLAGFLHSDLELDTPLFGGQAEGPPVTNIMFLKTHKTASSTVLNILYRFAETHNLSVALPAGSRVHLGYPWLFLARYVEGVGSQQRFNIMCNHLRFNLPQVQKVMPNDTFYFSILRNPVFQLESSFIYYKTYAPAFRGAPSLDAFLASPRTFYNDSRHLRNVYAKNNMWFDFGFDPNAQCEEGYVRARIAEVERRFRLVLIAEHLDESLVLLRRRLRWALDDVVAFRLNSRSARSVARLSPETRERARSWCALDWRLYEHFNRTLWAQLRAELGPRRLRGEVERLRARRRELASLCLQDGGALKNHTQIRDPRLRPYQSGKADILGYNLRPGLDNQTLGVCQRLVMPELQYMARLYALQFPEKPLKNIPFLGA.

At 1-10 (MMSMLGGLQR) the chain is on the cytoplasmic side. Residues 11–31 (YFRVILLLLLALTLLLLAGFL) traverse the membrane as a helical; Signal-anchor for type II membrane protein segment. Over 32–398 (HSDLELDTPL…PLKNIPFLGA (367 aa)) the chain is Lumenal. 6 N-linked (GlcNAc...) asparagine glycosylation sites follow: asparagine 79, asparagine 132, asparagine 179, asparagine 287, asparagine 330, and asparagine 360.

Belongs to the galactose-3-O-sulfotransferase family. As to expression, ubiquitous. Detected in heart, stomach, colon, liver and spleen, in epithelial cells lining the lower to middle layer of the crypts in colonic mucosa, hepatocytes surrounding the central vein of the liver, extravillous cytotrophoblasts in the basal plate of the septum of the placenta, renal tubules of the kidney, and neuronal cells of the cerebral cortex.

The protein localises to the golgi apparatus. It is found in the golgi stack membrane. It functions in the pathway protein modification; carbohydrate sulfation. Strongly inhibited by Cu(2+) and Zn(2+). Its function is as follows. Transfers a sulfate group to the hydroxyl group at C3 of non-reducing beta-galactosyl residues. Acts both on type 1 (Gal-beta-1,3-GlcNAc) and type 2 (Gal-beta-1,4-GlcNAc) chains with similar efficiency. The protein is Galactose-3-O-sulfotransferase 2 (GAL3ST2) of Homo sapiens (Human).